Reading from the N-terminus, the 69-residue chain is Ribosome modulation factor (69 aa).

Belongs to the ribosome modulation factor family.

Its subcellular location is the cytoplasm. In terms of biological role, during stationary phase, converts 70S ribosomes to an inactive dimeric form (100S ribosomes). The chain is Ribosome modulation factor from Chromohalobacter salexigens (strain ATCC BAA-138 / DSM 3043 / CIP 106854 / NCIMB 13768 / 1H11).